Consider the following 280-residue polypeptide: 2,3,4,5-tetrahydropyridine-2,6-dicarboxylate N-succinyltransferase (280 aa).

It belongs to the transferase hexapeptide repeat family.

It localises to the cytoplasm. The enzyme catalyses (S)-2,3,4,5-tetrahydrodipicolinate + succinyl-CoA + H2O = (S)-2-succinylamino-6-oxoheptanedioate + CoA. It participates in amino-acid biosynthesis; L-lysine biosynthesis via DAP pathway; LL-2,6-diaminopimelate from (S)-tetrahydrodipicolinate (succinylase route): step 1/3. The protein is 2,3,4,5-tetrahydropyridine-2,6-dicarboxylate N-succinyltransferase of Methylorubrum populi (strain ATCC BAA-705 / NCIMB 13946 / BJ001) (Methylobacterium populi).